A 549-amino-acid polypeptide reads, in one-letter code: Sphingosine-1-phosphate transporter SPNS2 (549 aa).

Disordered stretches follow at residues 14 to 36 (AEEE…GAGG) and 78 to 97 (PGCA…PASL). Transmembrane regions (helical) follow at residues 141 to 161 (GLLQ…FGYL), 169 to 189 (VILS…SFIP), 202 to 222 (LVGI…GDLF), 229 to 249 (LMLS…YITG), 261 to 281 (WALR…LILV), 320 to 340 (LATS…PLYL), 364 to 384 (LIFG…GAGA), 398 to 418 (LVCA…FVAA), 422 to 442 (IVGA…NWAI), 466 to 486 (TSHL…SDLI), and 507 to 527 (LCPF…LFFL).

This sequence belongs to the major facilitator superfamily. Spinster (TC 2.A.1.49) family. Expression is high in the lungs and liver, low in the lymph nodes, spleen and bone marrow, and very low but detectable in the thymus. Not expressed in red blood cells. Also expressed in the inner ear: expressed in the cochlea, both in the lateral wall and organ of Corti.

The protein resides in the cell membrane. It localises to the endosome membrane. It catalyses the reaction sphing-4-enine 1-phosphate(in) = sphing-4-enine 1-phosphate(out). The enzyme catalyses sphinganine 1-phosphate(in) = sphinganine 1-phosphate(out). In terms of biological role, lipid transporter that specifically mediates export of sphingosine-1-phosphate (sphing-4-enine 1-phosphate, S1P) and sphinganine-1-phosphate in the lymph, thereby playing a role in lymphocyte trafficking. S1P is a bioactive signaling molecule that regulates many physiological processes important for the development and for the immune system. Regulates levels of S1P and the S1P gradient that exists between the high circulating concentrations of S1P and low tissue levels that control lymphocyte trafficking. Required for the egress of T-cells from lymph nodes during an immune response by mediating S1P secretion, which generates a gradient that enables activated T-cells to access lymph. Also required for the egress of immature B-cells from the bone marrow. In contrast, it does not mediate S1P release from red blood cells. Involved in auditory function: S1P release in the inner ear is required for maintenance of the endocochlear potential in the cochlea. In addition to export, also able to mediate S1P import. The polypeptide is Sphingosine-1-phosphate transporter SPNS2 (Mus musculus (Mouse)).